Here is a 139-residue protein sequence, read N- to C-terminus: Large ribosomal subunit protein uL16 (139 aa).

It belongs to the universal ribosomal protein uL16 family. In terms of assembly, part of the 50S ribosomal subunit.

Its function is as follows. Binds 23S rRNA and is also seen to make contacts with the A and possibly P site tRNAs. The protein is Large ribosomal subunit protein uL16 of Treponema denticola (strain ATCC 35405 / DSM 14222 / CIP 103919 / JCM 8153 / KCTC 15104).